The primary structure comprises 364 residues: Dihydroorotate dehydrogenase (quinone) (364 aa).

Residues 61-65 (AGFDK) and threonine 85 contribute to the FMN site. Residue lysine 65 coordinates substrate. 110–114 (NRMGF) contacts substrate. Residues asparagine 139 and asparagine 170 each coordinate FMN. Asparagine 170 lines the substrate pocket. Serine 173 (nucleophile) is an active-site residue. Position 175 (asparagine 175) interacts with substrate. FMN contacts are provided by lysine 214 and alanine 242. Residue 243-244 (NT) participates in substrate binding. Residues glycine 266, glycine 295, and 316–317 (YS) contribute to the FMN site.

This sequence belongs to the dihydroorotate dehydrogenase family. Type 2 subfamily. Monomer. It depends on FMN as a cofactor.

It localises to the cell membrane. It catalyses the reaction (S)-dihydroorotate + a quinone = orotate + a quinol. It functions in the pathway pyrimidine metabolism; UMP biosynthesis via de novo pathway; orotate from (S)-dihydroorotate (quinone route): step 1/1. Its function is as follows. Catalyzes the conversion of dihydroorotate to orotate with quinone as electron acceptor. The polypeptide is Dihydroorotate dehydrogenase (quinone) (Rhodopseudomonas palustris (strain HaA2)).